Consider the following 320-residue polypeptide: Olfactory receptor 52W1 (320 aa).

Topologically, residues 1 to 30 are extracellular; that stretch reads MAETLQLNSTFLHPNFFILTGFPGLGSAQT. Asn-8 carries N-linked (GlcNAc...) asparagine glycosylation. The chain crosses the membrane as a helical span at residues 31–51; the sequence is WLTLVFGPIYLLALLGNGALP. Residues 52 to 59 are Cytoplasmic-facing; it reads AVVWIDST. The helical transmembrane segment at 60-80 threads the bilayer; that stretch reads LHQPMFLLLAILAATDLGLAT. The Extracellular portion of the chain corresponds to 81-104; it reads SIAPGLLAVLWLGPRSVPYAVCLV. A helical transmembrane segment spans residues 105 to 125; that stretch reads QMFFVHALTAMESGVLLAMAC. Over 126-144 the chain is Cytoplasmic; the sequence is DRAAAIGRPLHYPVLVTKA. The chain crosses the membrane as a helical span at residues 145–165; the sequence is CVGYAALALALKAVAIVVPFP. Topologically, residues 166–201 are extracellular; sequence LLVAKFEHFQAKTIGHTYCAHMAVVELVVGNTQATN. Residues 202-222 traverse the membrane as a helical segment; the sequence is LYGLALSLAISGMDILGITGS. The Cytoplasmic segment spans residues 223–242; the sequence is YGLIAHAVLQLPTREAHAKA. The chain crosses the membrane as a helical span at residues 243 to 263; it reads FGTCSSHICVILAFYIPGLFS. Residues 264-279 are Extracellular-facing; that stretch reads YLTHRFGHHTVPKPVH. The helical transmembrane segment at 280 to 300 threads the bilayer; it reads ILLSNIYLLLPPALNPLIYGA. The Cytoplasmic portion of the chain corresponds to 301-320; that stretch reads RTKQIRDRLLETFTFRKSPL.

Belongs to the G-protein coupled receptor 1 family.

Its subcellular location is the cell membrane. Odorant receptor. This chain is Olfactory receptor 52W1 (OR52W1), found in Homo sapiens (Human).